Reading from the N-terminus, the 576-residue chain is Arginine--tRNA ligase (576 aa).

Positions 126–136 match the 'HIGH' region motif; that stretch reads ANPTGPMHIGH.

Belongs to the class-I aminoacyl-tRNA synthetase family. In terms of assembly, monomer.

The protein resides in the cytoplasm. The enzyme catalyses tRNA(Arg) + L-arginine + ATP = L-arginyl-tRNA(Arg) + AMP + diphosphate. The polypeptide is Arginine--tRNA ligase (Rickettsia peacockii (strain Rustic)).